Reading from the N-terminus, the 1249-residue chain is Pleckstrin homology-like domain family B member 2 (1249 aa).

2 disordered regions span residues 64–85 and 128–154; these read QPVSAKRSPSPMGTSVRSSPSL and DHYTGRDSERSTRLSEKPPYSRYSSRN. A phosphoserine mark is found at Ser71 and Ser73. Residues 74–84 are compositionally biased toward polar residues; the sequence is PMGTSVRSSPS. Residues 128–143 show a composition bias toward basic and acidic residues; that stretch reads DHYTGRDSERSTRLSE. Phosphoserine occurs at positions 156, 203, 241, and 244. Disordered regions lie at residues 190 to 248 and 264 to 289; these read SPIS…LSNM and NQMSPLSLPPRSSLGNSRRGQLGEKD. Over residues 231–248 the composition is skewed to polar residues; it reads ENVSVRTRKYSGSSLSNM. Positions 267–283 are enriched in low complexity; it reads SPLSLPPRSSLGNSRRG. Phosphoserine is present on residues Ser329, Ser333, Ser347, Ser380, Ser383, Ser389, Ser411, Ser416, Ser465, Ser486, and Ser510. Residues 388–424 form a disordered region; sequence DSDLESLRQSSETPQPVLRERKSSISSISGRDDLMDY. Residues Thr546 and Thr570 each carry the phosphothreonine modification. Coiled-coil stretches lie at residues 580-692 and 718-803; these read TQEL…LDNC and FEDL…LCNL. Residues 866–934 form a disordered region; that stretch reads VSQPQSSEHF…LGQSNSCGSV (69 aa). Over residues 873–888 the composition is skewed to basic and acidic residues; the sequence is EHFRSLEERKKQHKEG. Position 894 is a phosphothreonine (Thr894). A compositionally biased stretch (polar residues) spans 901-919; it reads TPSLSPHFSSATMGRSTTP. A coiled-coil region spans residues 1028-1094; that stretch reads IARIEEMERL…QKLIEKEVKI (67 aa). A PH domain is found at 1139 to 1242; it reads EKTCRGYLIK…WMDVIVTGAE (104 aa).

As to quaternary structure, interacts with FLNC. Interacts with AMOTL2; interaction may facilitate PHLDB2 localization to the myotube podosome cortex that surrounds the core. Part of a cortical microtubule stabilization complex (CMSC) composed of KANK1, PPFIA1, PPFIBP1, ERC1/ELKS, PHLDB2/LL5beta, CLASPs, KIF21A and possibly additional interactors; within CMSCs KANK1 and PHLDB2/LL5beta appear to be the core components for targeting of microtubule-binding proteins KIF21A and CLASPs, whereas PPFIA1, PPFIBP1 and ERC1/ELKS serve as scaffolds for protein clustering. In terms of tissue distribution, expressed at postsynaptic membranes of skeletal neuromuscular junctions (at protein level).

Its subcellular location is the cytoplasm. It is found in the membrane. The protein resides in the cell projection. It localises to the podosome. The protein localises to the cell cortex. In terms of biological role, seems to be involved in the assembly of the postsynaptic apparatus. May play a role in acetyl-choline receptor (AChR) aggregation in the postsynaptic membrane. The polypeptide is Pleckstrin homology-like domain family B member 2 (Phldb2) (Mus musculus (Mouse)).